Consider the following 538-residue polypeptide: Chaperonin GroEL (538 aa).

ATP-binding positions include 29 to 32 (TIGP), 86 to 90 (DGTTT), glycine 413, 476 to 478 (NAA), and aspartate 492.

It belongs to the chaperonin (HSP60) family. Forms a cylinder of 14 subunits composed of two heptameric rings stacked back-to-back. Interacts with the co-chaperonin GroES.

The protein localises to the cytoplasm. The catalysed reaction is ATP + H2O + a folded polypeptide = ADP + phosphate + an unfolded polypeptide.. In terms of biological role, together with its co-chaperonin GroES, plays an essential role in assisting protein folding. The GroEL-GroES system forms a nano-cage that allows encapsulation of the non-native substrate proteins and provides a physical environment optimized to promote and accelerate protein folding. The sequence is that of Chaperonin GroEL from Staphylococcus aureus (strain USA300).